The following is a 467-amino-acid chain: MPILPSPNPPVEPYKIRMVEPIRLLPREERLRRLREAGWNVFRLRSIDIFIDLLTDSGTGSMSIYQWAALMTGDEAYAGARSWFRFRDAVRDVLGLDLVLPVHQGRAAERILYGELLRRRNARIVPANTHFDTGRAVILNQGGVPLDLPSPQASRREAYPFKGDIDVARLERLLKERSRDVAFILLVITNNTAGGQPVSMDNVKTVRELADAYGLPLVMDICRFAENAYLVKERDPRYRGWSVRDIAREMISYGDHFVMSAKKDGLANIGGFIATRDPSLYEDLAARVVLEEGYVTYGGLAGRDLEAIAQGLREVVEEDYLRHRVEQVRYLGELLSSQGVPIVEPVGGHAVYVDVLEALPEMPRSHYPADALAAALYLESGVRAVGLGALAFAREENGEIVYPEFELLRLAVPRRTYTNSHMEYVAASLARLLREGRRKVKGLRVVKEPRIKGIRHFLAELEPIEPV.

An N6-(pyridoxal phosphate)lysine modification is found at Lys-263.

It belongs to the beta-eliminating lyase family. Pyridoxal 5'-phosphate serves as cofactor.

It catalyses the reaction L-tryptophan + H2O = indole + pyruvate + NH4(+). It functions in the pathway amino-acid degradation; L-tryptophan degradation via pyruvate pathway; indole and pyruvate from L-tryptophan: step 1/1. This chain is Probable tryptophanase (tnaA), found in Aeropyrum pernix (strain ATCC 700893 / DSM 11879 / JCM 9820 / NBRC 100138 / K1).